Consider the following 536-residue polypeptide: Probable pectinesterase/pectinesterase inhibitor 59 (536 aa).

Residues 1–30 (MNMMMQKLSILFLHLILLVLLCVHPLTTVA) form the signal peptide. Residues 31-183 (DRNSTDWCDK…SHLISNCLAV (153 aa)) are pectinesterase inhibitor 59. Residues Asn-33, Asn-91, Asn-116, Asn-159, and Asn-195 are each glycosylated (N-linked (GlcNAc...) asparagine). Residues 221 to 522 (NLVVAKDGSG…FTVGKFIAGT (302 aa)) are pectinesterase 59. Residues Thr-298 and Gln-328 each coordinate substrate. Catalysis depends on Asp-351, which acts as the Proton donor; for pectinesterase activity. Cys-365 and Cys-385 form a disulfide bridge. Asp-372 (nucleophile; for pectinesterase activity) is an active-site residue. Positions 440 and 442 each coordinate substrate.

The protein in the N-terminal section; belongs to the PMEI family. It in the C-terminal section; belongs to the pectinesterase family. In terms of tissue distribution, expressed in siliques.

The protein localises to the secreted. It localises to the cell wall. The enzyme catalyses [(1-&gt;4)-alpha-D-galacturonosyl methyl ester](n) + n H2O = [(1-&gt;4)-alpha-D-galacturonosyl](n) + n methanol + n H(+). It functions in the pathway glycan metabolism; pectin degradation; 2-dehydro-3-deoxy-D-gluconate from pectin: step 1/5. Functionally, acts in the modification of cell walls via demethylesterification of cell wall pectin. The chain is Probable pectinesterase/pectinesterase inhibitor 59 (PME59) from Arabidopsis thaliana (Mouse-ear cress).